The chain runs to 546 residues: Fusion glycoprotein F0 (546 aa).

A signal peptide spans 1–26 (MVVILDKRCYCNLLILILMISECSVG). Residues 27 to 497 (ILHYEKLSKI…LISMLSMIIL (471 aa)) are Extracellular-facing. 3 N-linked (GlcNAc...) asparagine; by host glycosylation sites follow: Asn64, Asn67, and Asn99. 5 disulfides stabilise this stretch: Cys71-Cys192, Cys331-Cys340, Cys355-Cys363, Cys387-Cys392, and Cys394-Cys417. Positions 110–134 (LAGVIMAGVAIGIATAAQITAGVAL) are fusion peptide. The stretch at 135–163 (YEAMKNADNINKLKSSIESTNEAVVKLQE) forms a coiled coil. Asn414 and Asn464 each carry an N-linked (GlcNAc...) asparagine; by host glycan. Residues 459 to 484 (QISSMNQSLQQSKDYIKEAQRLLDTV) are a coiled coil. A helical transmembrane segment spans residues 498–518 (YVLSIASLCIGLITFISFIIV). Residues 519 to 546 (EKKRNTYSRLEDRRVRPTSSGDLYYIGT) are Cytoplasmic-facing.

Belongs to the paramyxoviruses fusion glycoprotein family. Homotrimer; disulfide-linked F1-F2. Interacts with the Glycoprotein G; this interaction involves both head and stalk regions of glygoprotein G. In pre-fusion state, found as a dimer of trimer. The inactive precursor F0 is glycosylated and proteolytically cleaved into F1 and F2 to be functionally active. The cleavage is mediated by cellular proteases during the transport and maturation of the polypeptide.

It localises to the virion membrane. The protein localises to the host cell membrane. In terms of biological role, class I viral fusion protein. Under the current model, the protein has at least 3 conformational states: pre-fusion native state, pre-hairpin intermediate state, and post-fusion hairpin state. During viral and plasma cell membrane fusion, the heptad repeat (HR) regions assume a trimer-of-hairpins structure, positioning the fusion peptide in close proximity to the C-terminal region of the ectodomain. The formation of this structure appears to drive apposition and subsequent fusion of viral and plasma cell membranes. Directs fusion of viral and cellular membranes leading to delivery of the nucleocapsid into the cytoplasm. This fusion is pH independent and occurs directly at the outer cell membrane. The trimer of F1-F2 (F protein) probably interacts with G at the virion surface. Upon G binding to its cellular receptor, the hydrophobic fusion peptide is unmasked and interacts with the cellular membrane, inducing the fusion between cell and virion membranes. Later in infection, F proteins expressed at the plasma membrane of infected cells could mediate fusion with adjacent cells to form syncytia, a cytopathic effect that could lead to tissue necrosis. The chain is Fusion glycoprotein F0 (F) from Cynopterus brachyotis (Lesser short-nosed fruit bat).